We begin with the raw amino-acid sequence, 447 residues long: Phosphoglucosamine mutase (447 aa).

Residue S101 is the Phosphoserine intermediate of the active site. Mg(2+) is bound by residues S101, D242, D244, and D246. S101 carries the post-translational modification Phosphoserine.

It belongs to the phosphohexose mutase family. It depends on Mg(2+) as a cofactor. In terms of processing, activated by phosphorylation.

It catalyses the reaction alpha-D-glucosamine 1-phosphate = D-glucosamine 6-phosphate. Its function is as follows. Catalyzes the conversion of glucosamine-6-phosphate to glucosamine-1-phosphate. This is Phosphoglucosamine mutase from Azorhizobium caulinodans (strain ATCC 43989 / DSM 5975 / JCM 20966 / LMG 6465 / NBRC 14845 / NCIMB 13405 / ORS 571).